The sequence spans 71 residues: MFLSLPTLTVLIPLVSLAGLFYSASVEENFPQGCTSTASLCFYSLLLPITIPVYVFFHLWTWMGIKLFRHN.

Over Met-1–Leu-3 the chain is Cytoplasmic. Residues Ser-4–Val-26 form a helical membrane-spanning segment. Residues Glu-27–Ser-44 lie on the Lumenal side of the membrane. A helical transmembrane segment spans residues Leu-45–Ile-65. The Cytoplasmic segment spans residues Lys-66 to Asn-71.

Component of the glycosylphosphatidylinositol-N-acetylglucosaminyltransferase (GPI-GnT) complex composed at least by PIGA, PIGC, PIGH, PIGP, PIGQ, PIGY and DPM2. Interacts directly with PIGA; this interaction regulates glycosylphosphatidylinositol-N-acetylglucosaminyltransferase activity. Does not interact with Ras proteins.

It localises to the endoplasmic reticulum membrane. Its pathway is glycolipid biosynthesis; glycosylphosphatidylinositol-anchor biosynthesis. Part of the glycosylphosphatidylinositol-N-acetylglucosaminyltransferase (GPI-GnT) complex that catalyzes the transfer of N-acetylglucosamine from UDP-N-acetylglucosamine to phosphatidylinositol and participates in the first step of GPI biosynthesis. May act by regulating the catalytic subunit PIGA. The polypeptide is Phosphatidylinositol N-acetylglucosaminyltransferase subunit Y (Homo sapiens (Human)).